The following is a 282-amino-acid chain: uncharacterized protein (282 aa).

The N-terminal stretch at 1-18 (MIDLLVILVSLLFGVVWY) is a signal peptide.

Belongs to the IIV-6 213R family.

This is an uncharacterized protein from Aedes vexans (Inland floodwater mosquito).